A 526-amino-acid chain; its full sequence is Efflux pump aunC (526 aa).

The next 14 helical transmembrane spans lie at 23–43 (LCYKLVLVTVGLCFCIFCTSL), 64–84 (DVGWYASAYLLTTCAVTLPFG), 89–109 (FFPIKWVYLSALFVFELGSFI), 125–145 (VAGLGGGGLFSGSLLIITQCV), 155–175 (GFIMSIFAVASVIAPLMGGAF), 183–203 (WCFYINLPFGLVSAVVIFFTF), 218–238 (AAGLDPLGTATFLPAIVCLLL), 254–274 (IIALFTLFGVLLACFVGLQLW), 296–316 (LYGFCLNGAMFTFVYYLPIWF), 339–359 (VIFAIISGVLVSATGYFGPFM), 360–380 (LLSAAMASIAAGLLSMLHPSS), 386–406 (IGYQVLLGSSIGMGFQLPVFV), 418–438 (TATALMTFIQLLGGAIFVSVA), and 491–511 (VHTFYLAIGLAAASFLAATVI).

It belongs to the major facilitator superfamily. TCR/Tet family.

The protein resides in the cell membrane. Efflux pump; part of the gene cluster that mediates the biosynthesis of aurasperone B, a dimeric gamma-naphthopyrone. This Aspergillus niger (strain ATCC 1015 / CBS 113.46 / FGSC A1144 / LSHB Ac4 / NCTC 3858a / NRRL 328 / USDA 3528.7) protein is Efflux pump aunC.